A 404-amino-acid chain; its full sequence is Cysteine desulfurase IscS (404 aa).

Pyridoxal 5'-phosphate is bound by residues 75–76 (AT), N155, Q183, and 203–205 (SAH). K206 bears the N6-(pyridoxal phosphate)lysine mark. T243 is a binding site for pyridoxal 5'-phosphate. C328 (cysteine persulfide intermediate) is an active-site residue. C328 contacts [2Fe-2S] cluster.

Belongs to the class-V pyridoxal-phosphate-dependent aminotransferase family. NifS/IscS subfamily. Homodimer. Forms a heterotetramer with IscU, interacts with other sulfur acceptors. It depends on pyridoxal 5'-phosphate as a cofactor.

The protein localises to the cytoplasm. The catalysed reaction is (sulfur carrier)-H + L-cysteine = (sulfur carrier)-SH + L-alanine. It participates in cofactor biosynthesis; iron-sulfur cluster biosynthesis. In terms of biological role, master enzyme that delivers sulfur to a number of partners involved in Fe-S cluster assembly, tRNA modification or cofactor biosynthesis. Catalyzes the removal of elemental sulfur atoms from cysteine to produce alanine. Functions as a sulfur delivery protein for Fe-S cluster synthesis onto IscU, an Fe-S scaffold assembly protein, as well as other S acceptor proteins. In Shewanella sediminis (strain HAW-EB3), this protein is Cysteine desulfurase IscS.